Consider the following 354-residue polypeptide: Ferrochelatase (354 aa).

Positions 204 and 306 each coordinate Fe cation.

It belongs to the ferrochelatase family.

The protein localises to the cytoplasm. It catalyses the reaction heme b + 2 H(+) = protoporphyrin IX + Fe(2+). Its pathway is porphyrin-containing compound metabolism; protoheme biosynthesis; protoheme from protoporphyrin-IX: step 1/1. Functionally, catalyzes the ferrous insertion into protoporphyrin IX. The protein is Ferrochelatase of Coxiella burnetii (strain Dugway 5J108-111).